Consider the following 583-residue polypeptide: MRTSQFPLNTLKEIPSDAEIVSHQLMLRAGLIRKLAAGLYTWLPLGLKVLRRVERVVREEMDRAGALEVLMPVVQPAELWQESGRWEQYGPELARLHDRHDRAFCLGPTHEEIITDLARNELKSYRQLPVNFYQIQTKFRDEIRPRFGVMRAREFVMKDAYSFHLDQESLAQTYDAMYVAYSNIFSRLGLRFRPVLADTGAIGGSHSHEFHVLADSGEDAIAFSTVSDYAANVEQAEALAPTAPRPAPTAALLKVETPGKKSIAEVSEFLGVPPHQILKTVAVMQTIVDDDGLDRDMFVTVLLRGDHELNEVKLGKVLGRFRFASEDEIERHMGCRPGYIGPLNLPAGTAVGPVYADRAVAVMSDFVCGANEAGYHFSGVNWERDLPLPQDEYLCDLRNVVEGDPSPDGLGTLRIARGIEVGHIFQLGTKYSAALNATVLNEEGRSQVMLMGCYGIGVSRVVAAAIEQNHDERGIVWPEALAPFQVALCPINMQTSARVRTTAERLYAELSAAGFEVLYDDRKVRPGVMFADMELIGIPHRIVISERGLDSGALEYKGRRDADNQSIGIDGVIEFLRERSESR.

This sequence belongs to the class-II aminoacyl-tRNA synthetase family. ProS type 1 subfamily. In terms of assembly, homodimer.

It localises to the cytoplasm. It catalyses the reaction tRNA(Pro) + L-proline + ATP = L-prolyl-tRNA(Pro) + AMP + diphosphate. Catalyzes the attachment of proline to tRNA(Pro) in a two-step reaction: proline is first activated by ATP to form Pro-AMP and then transferred to the acceptor end of tRNA(Pro). As ProRS can inadvertently accommodate and process non-cognate amino acids such as alanine and cysteine, to avoid such errors it has two additional distinct editing activities against alanine. One activity is designated as 'pretransfer' editing and involves the tRNA(Pro)-independent hydrolysis of activated Ala-AMP. The other activity is designated 'posttransfer' editing and involves deacylation of mischarged Ala-tRNA(Pro). The misacylated Cys-tRNA(Pro) is not edited by ProRS. This chain is Proline--tRNA ligase, found in Methylococcus capsulatus (strain ATCC 33009 / NCIMB 11132 / Bath).